The sequence spans 296 residues: tRNA uridine(34) hydroxylase (296 aa).

A Rhodanese domain is found at 132–226 (AGRPVVMLDT…YFEEVGGAHY (95 aa)). Cysteine 186 serves as the catalytic Cysteine persulfide intermediate.

Belongs to the TrhO family.

The catalysed reaction is uridine(34) in tRNA + AH2 + O2 = 5-hydroxyuridine(34) in tRNA + A + H2O. Catalyzes oxygen-dependent 5-hydroxyuridine (ho5U) modification at position 34 in tRNAs. The polypeptide is tRNA uridine(34) hydroxylase (Burkholderia thailandensis (strain ATCC 700388 / DSM 13276 / CCUG 48851 / CIP 106301 / E264)).